The sequence spans 296 residues: MPELPEVETVKRGLAPAMEGARVTRLELRRRDLRFPFPDALAERVSGRTIVGLGRRAKYLLVDLDDGNTLISHLGMSGSFRIEEGAASAMPGEFHHARSKDEKHDHVVFHLEGGGGPRRVVYNDPRRFGFMDIVGRADLSAHPFFRDLGPEPTGNELGATYLAERFRDKAQPLKSALLDQKNIAGLGNIYVCEALWRSHLSPIRAAGTLVTSGGRPKQQLDLLVASIREVIADAIAAGGSSLRDHIRADGSLGYFQHSFSVYDREGQACGTPGCGGTVARIVQAGRSTFYCAACQK.

Pro-2 (schiff-base intermediate with DNA) is an active-site residue. Catalysis depends on Glu-3, which acts as the Proton donor. Lys-58 (proton donor; for beta-elimination activity) is an active-site residue. Residues His-104, Arg-126, and Lys-169 each coordinate DNA. Residues 260 to 296 (SVYDREGQACGTPGCGGTVARIVQAGRSTFYCAACQK) form an FPG-type zinc finger. The Proton donor; for delta-elimination activity role is filled by Arg-286.

Belongs to the FPG family. As to quaternary structure, monomer. Zn(2+) is required as a cofactor.

The catalysed reaction is Hydrolysis of DNA containing ring-opened 7-methylguanine residues, releasing 2,6-diamino-4-hydroxy-5-(N-methyl)formamidopyrimidine.. It catalyses the reaction 2'-deoxyribonucleotide-(2'-deoxyribose 5'-phosphate)-2'-deoxyribonucleotide-DNA = a 3'-end 2'-deoxyribonucleotide-(2,3-dehydro-2,3-deoxyribose 5'-phosphate)-DNA + a 5'-end 5'-phospho-2'-deoxyribonucleoside-DNA + H(+). Involved in base excision repair of DNA damaged by oxidation or by mutagenic agents. Acts as a DNA glycosylase that recognizes and removes damaged bases. Has a preference for oxidized purines, such as 7,8-dihydro-8-oxoguanine (8-oxoG). Has AP (apurinic/apyrimidinic) lyase activity and introduces nicks in the DNA strand. Cleaves the DNA backbone by beta-delta elimination to generate a single-strand break at the site of the removed base with both 3'- and 5'-phosphates. This is Formamidopyrimidine-DNA glycosylase from Rhizobium etli (strain ATCC 51251 / DSM 11541 / JCM 21823 / NBRC 15573 / CFN 42).